The sequence spans 251 residues: ATP synthase subunit a (251 aa).

A run of 5 helical transmembrane segments spans residues 34–54, 93–113, 130–150, 195–215, and 216–236; these read VFLT…AASS, FVGT…LVPF, INTT…AGFS, LVVG…VMAL, and GLFT…AYIG.

The protein belongs to the ATPase A chain family. F-type ATPases have 2 components, CF(1) - the catalytic core - and CF(0) - the membrane proton channel. CF(1) has five subunits: alpha(3), beta(3), gamma(1), delta(1), epsilon(1). CF(0) has four main subunits: a, b, b' and c.

It is found in the cellular thylakoid membrane. Functionally, key component of the proton channel; it plays a direct role in the translocation of protons across the membrane. The polypeptide is ATP synthase subunit a (Nostoc sp. (strain PCC 7120 / SAG 25.82 / UTEX 2576)).